Consider the following 205-residue polypeptide: Dephospho-CoA kinase (205 aa).

Residues 13 to 205 (RIGLTGGIAS…KWINTIREIL (193 aa)) enclose the DPCK domain. 21 to 26 (ASGKST) serves as a coordination point for ATP.

The protein belongs to the CoaE family.

The protein resides in the cytoplasm. It catalyses the reaction 3'-dephospho-CoA + ATP = ADP + CoA + H(+). The protein operates within cofactor biosynthesis; coenzyme A biosynthesis; CoA from (R)-pantothenate: step 5/5. In terms of biological role, catalyzes the phosphorylation of the 3'-hydroxyl group of dephosphocoenzyme A to form coenzyme A. This is Dephospho-CoA kinase from Prochlorococcus marinus (strain MIT 9312).